The sequence spans 211 residues: Redox-sensing transcriptional repressor Rex (211 aa).

The H-T-H motif DNA-binding region spans 18–57 (LYYRFIESLHAAGKQRVSSTELSQAVKVDSATIRRDFSYF). Residue 92-97 (GVGNLG) coordinates NAD(+).

Belongs to the transcriptional regulatory Rex family. As to quaternary structure, homodimer.

The protein localises to the cytoplasm. Functionally, modulates transcription in response to changes in cellular NADH/NAD(+) redox state. In Shouchella clausii (strain KSM-K16) (Alkalihalobacillus clausii), this protein is Redox-sensing transcriptional repressor Rex.